The primary structure comprises 168 residues: Chorismate pyruvate-lyase (168 aa).

Residues Met36, Arg78, Leu116, and Glu157 each contribute to the substrate site.

It belongs to the UbiC family. In terms of assembly, monomer.

The protein localises to the cytoplasm. The enzyme catalyses chorismate = 4-hydroxybenzoate + pyruvate. It participates in cofactor biosynthesis; ubiquinone biosynthesis. Functionally, removes the pyruvyl group from chorismate, with concomitant aromatization of the ring, to provide 4-hydroxybenzoate (4HB) for the ubiquinone pathway. This is Chorismate pyruvate-lyase from Yersinia enterocolitica serotype O:8 / biotype 1B (strain NCTC 13174 / 8081).